We begin with the raw amino-acid sequence, 606 residues long: Mitogen-activated protein kinase 20 (606 aa).

Positions 25–316 (FKVQEVIGKG…AEEALADPYF (292 aa)) constitute a Protein kinase domain. ATP-binding positions include 31–39 (IGKGSYGVV) and lysine 54. Aspartate 151 functions as the Proton acceptor in the catalytic mechanism. Phosphothreonine is present on threonine 187. The TXY signature appears at 187-189 (TDY). Residue tyrosine 189 is modified to Phosphotyrosine. Threonine 192 carries the post-translational modification Phosphothreonine.

The protein belongs to the protein kinase superfamily. CMGC Ser/Thr protein kinase family. MAP kinase subfamily. Dually phosphorylated on Thr-187 and Tyr-189, which activates the enzyme.

The enzyme catalyses L-seryl-[protein] + ATP = O-phospho-L-seryl-[protein] + ADP + H(+). It carries out the reaction L-threonyl-[protein] + ATP = O-phospho-L-threonyl-[protein] + ADP + H(+). With respect to regulation, activated by threonine and tyrosine phosphorylation. This is Mitogen-activated protein kinase 20 (MPK20) from Arabidopsis thaliana (Mouse-ear cress).